We begin with the raw amino-acid sequence, 329 residues long: uncharacterized protein (329 aa).

In terms of domain architecture, SIS spans 38-184; it reads IVKLILKSQE…MACLMRAKNF (147 aa). Position 56–61 (56–61) interacts with ATP; that stretch reads GVGKSA. CBS domains are found at residues 211-267 and 276-329; these read QTTN…GLSL and TLKP…GLKA.

The protein belongs to the SIS family. GutQ/KpsF subfamily.

This is an uncharacterized protein from Helicobacter pylori (strain J99 / ATCC 700824) (Campylobacter pylori J99).